A 512-amino-acid polypeptide reads, in one-letter code: ATP synthase subunit alpha (512 aa).

169–176 (GDRQTGKT) serves as a coordination point for ATP.

The protein belongs to the ATPase alpha/beta chains family. As to quaternary structure, F-type ATPases have 2 components, CF(1) - the catalytic core - and CF(0) - the membrane proton channel. CF(1) has five subunits: alpha(3), beta(3), gamma(1), delta(1), epsilon(1). CF(0) has three main subunits: a(1), b(2) and c(9-12). The alpha and beta chains form an alternating ring which encloses part of the gamma chain. CF(1) is attached to CF(0) by a central stalk formed by the gamma and epsilon chains, while a peripheral stalk is formed by the delta and b chains.

The protein localises to the cell inner membrane. It carries out the reaction ATP + H2O + 4 H(+)(in) = ADP + phosphate + 5 H(+)(out). Its function is as follows. Produces ATP from ADP in the presence of a proton gradient across the membrane. The alpha chain is a regulatory subunit. This Rickettsia canadensis (strain McKiel) protein is ATP synthase subunit alpha.